A 301-amino-acid chain; its full sequence is MADQLRTLPKNAKVIYEHCLKQIPNSLSQQDLVEAIGASISVNDLSSALNILLSRRLLDPLRQGNVLVYRAVRLDEAKTVSTMEGDEQIVYSFIKNSGNEGIWRKTLTLRTNLHVSVVDRCLKSLESKNLVKSIKSVKNPTRKIYMLYDLVPSTELTGGPWFTDQELDVEFIENLKKVIYRYVHSKSFPPKKAAMGPDLVWGPEYNGYPTALQIHNWLRSTNITKVDLSLANVISLVDVLIYDGKVEKRSDGASYRAIRVNNENIDAFTESPCGNCPVSDICDANSRVNPITCEYLDKWLN.

Belongs to the eukaryotic RPC34/RPC39 RNA polymerase subunit family. As to quaternary structure, component of the RNA polymerase III (Pol III) complex consisting of 17 subunits. Interacts with TFIIB.

The protein localises to the nucleus. DNA-dependent RNA polymerase catalyzes the transcription of DNA into RNA using the four ribonucleoside triphosphates as substrates. Specific peripheric component of RNA polymerase III which synthesizes small RNAs, such as 5S rRNA and tRNAs. The protein is Probable DNA-directed RNA polymerase III subunit rpc6 (rpc6) of Schizosaccharomyces pombe (strain 972 / ATCC 24843) (Fission yeast).